We begin with the raw amino-acid sequence, 100 residues long: MQITDVRIRKISAEGKMKAIVSVTFDNEFVVHDIKVIEGQNGLFIAMPSRKTPTGEFKDIAHPINTETRQKIQKAILDEYEVVKNETTNNENGEEITSED.

Belongs to the SpoVG family.

Functionally, could be involved in septation. The chain is Putative septation protein SpoVG from Clostridium novyi (strain NT).